Here is a 341-residue protein sequence, read N- to C-terminus: Phosphate acyltransferase (341 aa).

This sequence belongs to the PlsX family. As to quaternary structure, homodimer. Probably interacts with PlsY.

The protein resides in the cytoplasm. The catalysed reaction is a fatty acyl-[ACP] + phosphate = an acyl phosphate + holo-[ACP]. It functions in the pathway lipid metabolism; phospholipid metabolism. Its function is as follows. Catalyzes the reversible formation of acyl-phosphate (acyl-PO(4)) from acyl-[acyl-carrier-protein] (acyl-ACP). This enzyme utilizes acyl-ACP as fatty acyl donor, but not acyl-CoA. In Ehrlichia ruminantium (strain Gardel), this protein is Phosphate acyltransferase.